A 1381-amino-acid chain; its full sequence is DNA-directed RNA polymerase subunit beta (1381 aa).

The protein belongs to the RNA polymerase beta chain family. The RNAP catalytic core consists of 2 alpha, 1 beta, 1 beta' and 1 omega subunit. When a sigma factor is associated with the core the holoenzyme is formed, which can initiate transcription.

The enzyme catalyses RNA(n) + a ribonucleoside 5'-triphosphate = RNA(n+1) + diphosphate. Functionally, DNA-dependent RNA polymerase catalyzes the transcription of DNA into RNA using the four ribonucleoside triphosphates as substrates. The protein is DNA-directed RNA polymerase subunit beta of Sulfurimonas denitrificans (strain ATCC 33889 / DSM 1251) (Thiomicrospira denitrificans (strain ATCC 33889 / DSM 1251)).